Here is a 992-residue protein sequence, read N- to C-terminus: UPF0182 protein Mb3215c (992 aa).

7 consecutive transmembrane segments (helical) span residues 17 to 39, 59 to 81, 113 to 135, 169 to 191, 212 to 229, 255 to 277, and 284 to 306; these read RILIMIALGVIVLLLAGPRLIDA, LATRIVVCLVAGVVVGGIVFGGL, LVGIGIPAAIGLLAGIVAQSYWA, LMLSYMLVSVFLAFVANLVAHYI, LVSLVGVLVLLKAVAYWL, VLPAKLILMAIALICAAAVFSAI, and IPAIGLVLLLLSSLIVGAGWPLI. The disordered stretch occupies residues 906-938; sequence PTEAAVPPSPAANPPPPASGPQPPPVTAAPPVP. A compositionally biased stretch (pro residues) spans 912–938; that stretch reads PPSPAANPPPPASGPQPPPVTAAPPVP.

It belongs to the UPF0182 family.

It is found in the cell membrane. The polypeptide is UPF0182 protein Mb3215c (Mycobacterium bovis (strain ATCC BAA-935 / AF2122/97)).